The primary structure comprises 224 residues: Thiamine-phosphate synthase (224 aa).

4-amino-2-methyl-5-(diphosphooxymethyl)pyrimidine contacts are provided by residues 44–48 and Asn79; that span reads QFREK. 2 residues coordinate Mg(2+): Asp80 and Asp99. 4-amino-2-methyl-5-(diphosphooxymethyl)pyrimidine is bound at residue Ser117. 143-145 contacts 2-[(2R,5Z)-2-carboxy-4-methylthiazol-5(2H)-ylidene]ethyl phosphate; it reads TET. Lys146 provides a ligand contact to 4-amino-2-methyl-5-(diphosphooxymethyl)pyrimidine. 2-[(2R,5Z)-2-carboxy-4-methylthiazol-5(2H)-ylidene]ethyl phosphate-binding positions include Gly175 and 195 to 196; that span reads IS.

This sequence belongs to the thiamine-phosphate synthase family. Mg(2+) is required as a cofactor.

It catalyses the reaction 2-[(2R,5Z)-2-carboxy-4-methylthiazol-5(2H)-ylidene]ethyl phosphate + 4-amino-2-methyl-5-(diphosphooxymethyl)pyrimidine + 2 H(+) = thiamine phosphate + CO2 + diphosphate. The catalysed reaction is 2-(2-carboxy-4-methylthiazol-5-yl)ethyl phosphate + 4-amino-2-methyl-5-(diphosphooxymethyl)pyrimidine + 2 H(+) = thiamine phosphate + CO2 + diphosphate. It carries out the reaction 4-methyl-5-(2-phosphooxyethyl)-thiazole + 4-amino-2-methyl-5-(diphosphooxymethyl)pyrimidine + H(+) = thiamine phosphate + diphosphate. The protein operates within cofactor biosynthesis; thiamine diphosphate biosynthesis; thiamine phosphate from 4-amino-2-methyl-5-diphosphomethylpyrimidine and 4-methyl-5-(2-phosphoethyl)-thiazole: step 1/1. Functionally, condenses 4-methyl-5-(beta-hydroxyethyl)thiazole monophosphate (THZ-P) and 2-methyl-4-amino-5-hydroxymethyl pyrimidine pyrophosphate (HMP-PP) to form thiamine monophosphate (TMP). This chain is Thiamine-phosphate synthase, found in Bacillus velezensis (strain DSM 23117 / BGSC 10A6 / LMG 26770 / FZB42) (Bacillus amyloliquefaciens subsp. plantarum).